A 219-amino-acid chain; its full sequence is Histone H1.4 (219 aa).

The span at 1–15 (MSETAPAAPAAPAPA) shows a compositional bias: low complexity. The tract at residues 1 to 41 (MSETAPAAPAAPAPAEKTPVKKKARKSAGAAKRKASGPPVS) is disordered. Ser-2 is modified (N-acetylserine). Ser-2 is subject to Phosphoserine. The residue at position 17 (Lys-17) is an N6-acetyllysine. Thr-18 is subject to Phosphothreonine. Residues 20 to 35 (VKKKARKSAGAAKRKA) are compositionally biased toward basic residues. Residue Lys-26 is modified to N6-acetyllysine; alternate. At Lys-26 the chain carries N6-methyllysine; alternate. Lys-34 carries the post-translational modification N6-(beta-hydroxybutyryl)lysine; alternate. Lys-34 carries the post-translational modification N6-succinyllysine; alternate. The residue at position 36 (Ser-36) is a Phosphoserine. Residues 36-109 (SGPPVSELIT…GASGSFKLNK (74 aa)) form the H15 domain. Lys-52 is modified (N6-(beta-hydroxybutyryl)lysine). Arg-54 is modified (citrulline). N6-(beta-hydroxybutyryl)lysine is present on residues Lys-64, Lys-85, Lys-90, and Lys-106. Residues 91 to 219 (GTLVQTKGTG…KPKKAPAKKK (129 aa)) form a disordered region. Residues 119 to 140 (KPKKAGAAKPKKPAGAAKKPKK) show a composition bias toward basic residues. Position 146 is a phosphothreonine (Thr-146). Basic residues-rich tracts occupy residues 149-160 (KGAKKTPKKAKK) and 168-185 (KKAKSPKKAKAAKPKKAP). Ser-187 carries the post-translational modification Phosphoserine. Residues 192–219 (KAVKPKAAKPKAAKPKTAKPKKAPAKKK) are compositionally biased toward basic residues.

This sequence belongs to the histone H1/H5 family. In terms of processing, H1 histones are progressively phosphorylated during the cell cycle, becoming maximally phosphorylated during late G2 phase and M phase, and being dephosphorylated sharply thereafter. Post-translationally, acetylated at Lys-26. Deacetylated at Lys-26 by SIRT1. Citrullination at Arg-54 (H1R54ci) by PADI4 takes place within the DNA-binding site of H1 and results in its displacement from chromatin and global chromatin decondensation, thereby promoting pluripotency and stem cell maintenance.

It is found in the nucleus. The protein localises to the chromosome. Functionally, histone H1 protein binds to linker DNA between nucleosomes forming the macromolecular structure known as the chromatin fiber. Histones H1 are necessary for the condensation of nucleosome chains into higher-order structured fibers. Also acts as a regulator of individual gene transcription through chromatin remodeling, nucleosome spacing and DNA methylation. The sequence is that of Histone H1.4 from Oryctolagus cuniculus (Rabbit).